A 150-amino-acid chain; its full sequence is FAD synthase (150 aa).

ATP is bound by residues 10–11, 15–18, Asp-97, and Tyr-124; these read VF and HPGH.

It belongs to the archaeal FAD synthase family. As to quaternary structure, homodimer. A divalent metal cation serves as cofactor.

It carries out the reaction FMN + ATP + H(+) = FAD + diphosphate. Its pathway is cofactor biosynthesis; FAD biosynthesis; FAD from FMN: step 1/1. Functionally, catalyzes the transfer of the AMP portion of ATP to flavin mononucleotide (FMN) to produce flavin adenine dinucleotide (FAD) coenzyme. The protein is FAD synthase of Methanopyrus kandleri (strain AV19 / DSM 6324 / JCM 9639 / NBRC 100938).